We begin with the raw amino-acid sequence, 413 residues long: Histidine--tRNA ligase (413 aa).

The protein belongs to the class-II aminoacyl-tRNA synthetase family. In terms of assembly, homodimer.

The protein localises to the cytoplasm. The enzyme catalyses tRNA(His) + L-histidine + ATP = L-histidyl-tRNA(His) + AMP + diphosphate + H(+). This chain is Histidine--tRNA ligase, found in Ehrlichia canis (strain Jake).